A 797-amino-acid chain; its full sequence is Kinesin-like protein KIF18B (797 aa).

A Kinesin motor domain is found at 11-352; that stretch reads TVAVVVRVRP…LKYANRAKEI (342 aa). 110–117 serves as a coordination point for ATP; that stretch reads GATGAGKT. Residues 367 to 402 adopt a coiled-coil conformation; it reads ISKYATICEQLKTEVADLQAKLRAYEDAARDAGKQI. Disordered regions lie at residues 412-476, 528-564, 579-640, and 730-797; these read EEAV…PNRL, AAVSPQPTDTSGAPPALRTQRGCDASPSTLSAEPSVP, LSSP…KEPQ, and KGSS…SGPR. Polar residues predominate over residues 594 to 608; that stretch reads MSNTSRLETPHSLNT. Positions 731–744 are enriched in low complexity; the sequence is GSSIPKPSSISKGS.

This sequence belongs to the TRAFAC class myosin-kinesin ATPase superfamily. Kinesin family.

It localises to the nucleus. It is found in the cytoplasm. The protein localises to the cytoskeleton. May play an important role in microtubule plus-end depolymerizing activity in mitotic cells. This is Kinesin-like protein KIF18B (KIF18B) from Gallus gallus (Chicken).